The sequence spans 701 residues: Elongation factor G (701 aa).

The tr-type G domain occupies 10-286 (NKVRNIGIMA…AVIDYLPSPL (277 aa)). GTP is bound by residues 19 to 26 (AHIDAGKT), 83 to 87 (DTPGH), and 137 to 140 (NKMD).

The protein belongs to the TRAFAC class translation factor GTPase superfamily. Classic translation factor GTPase family. EF-G/EF-2 subfamily.

Its subcellular location is the cytoplasm. Its function is as follows. Catalyzes the GTP-dependent ribosomal translocation step during translation elongation. During this step, the ribosome changes from the pre-translocational (PRE) to the post-translocational (POST) state as the newly formed A-site-bound peptidyl-tRNA and P-site-bound deacylated tRNA move to the P and E sites, respectively. Catalyzes the coordinated movement of the two tRNA molecules, the mRNA and conformational changes in the ribosome. The protein is Elongation factor G of Mycobacteroides abscessus (strain ATCC 19977 / DSM 44196 / CCUG 20993 / CIP 104536 / JCM 13569 / NCTC 13031 / TMC 1543 / L948) (Mycobacterium abscessus).